Reading from the N-terminus, the 358-residue chain is Gibberellin 3-beta-dioxygenase 1 (358 aa).

The Fe2OG dioxygenase domain maps to 204–308 (DLNWAQAALQ…RLSVAFLWGP (105 aa)). Residues H232, D234, and H289 each coordinate Fe cation. R299 is a catalytic residue.

Belongs to the iron/ascorbate-dependent oxidoreductase family. GA3OX subfamily. The cofactor is L-ascorbate. Fe cation is required as a cofactor. In terms of tissue distribution, expressed in stems, roots, leaves, flowers, and siliques. Highly expressed near the nodes in stems and in the stamen filaments of flowers. Detected in developing cotyledons, vegetative shoot apical meristem and non-meristematic, non-elongation regions of the roots. Found in the cortex and the endodermis of the embryo axis in germinating seeds and in the placenta in developing siliques.

It catalyses the reaction gibberellin A9 + 2-oxoglutarate + O2 = gibberellin A4 + succinate + CO2. The catalysed reaction is gibberellin A20 + 2-oxoglutarate + O2 = gibberellin A1 + succinate + CO2. Its pathway is plant hormone biosynthesis; gibberellin biosynthesis. Converts the inactive gibberellin (GA) precursors GA9 and GA20 into the bioactives gibberellins GA4 and GA1, respectively. Involved in the production of bioactive GA for vegetative growth and development. The chain is Gibberellin 3-beta-dioxygenase 1 (GA3OX1) from Arabidopsis thaliana (Mouse-ear cress).